The sequence spans 53 residues: UPF0391 membrane protein BP1737 (53 aa).

A run of 2 helical transmembrane segments spans residues 5–25 (AVVF…GIAA) and 30–50 (IAKI…LGGV).

This sequence belongs to the UPF0391 family.

Its subcellular location is the cell membrane. The protein is UPF0391 membrane protein BP1737 of Bordetella pertussis (strain Tohama I / ATCC BAA-589 / NCTC 13251).